The primary structure comprises 131 residues: Leptin receptor overlapping transcript-like 1 (131 aa).

The next 4 helical transmembrane spans lie at L7–L27, Q32–A52, L69–A89, and A100–F120.

It belongs to the OB-RGRP/VPS55 family.

The protein resides in the membrane. Functionally, negatively regulates growth hormone (GH) receptor cell surface expression in liver. May play a role in liver resistance to GH during periods of reduced nutrient availability. This Bos taurus (Bovine) protein is Leptin receptor overlapping transcript-like 1 (LEPROTL1).